The sequence spans 167 residues: 3-isopropylmalate dehydratase small subunit (167 aa).

The protein belongs to the LeuD family. LeuD type 2 subfamily. As to quaternary structure, heterodimer of LeuC and LeuD.

The catalysed reaction is (2R,3S)-3-isopropylmalate = (2S)-2-isopropylmalate. The protein operates within amino-acid biosynthesis; L-leucine biosynthesis; L-leucine from 3-methyl-2-oxobutanoate: step 2/4. Catalyzes the isomerization between 2-isopropylmalate and 3-isopropylmalate, via the formation of 2-isopropylmaleate. This Oleidesulfovibrio alaskensis (strain ATCC BAA-1058 / DSM 17464 / G20) (Desulfovibrio alaskensis) protein is 3-isopropylmalate dehydratase small subunit.